The chain runs to 159 residues: U-actitoxin-Avd13a/b (159 aa).

The first 18 residues, 1–18, serve as a signal peptide directing secretion; the sequence is MKSIFLVFFAVCLVKAEA. Residues 19-26 constitute a propeptide that is removed on maturation; it reads GKGRKREP. 2 disulfides stabilise this stretch: Cys-33–Cys-45 and Cys-36–Cys-52. Residues 59-60 constitute a propeptide that is removed on maturation; it reads EP. Cystine bridges form between Cys-67/Cys-79 and Cys-70/Cys-86. A propeptide spanning residues 93-94 is cleaved from the precursor; that stretch reads EP. Intrachain disulfides connect Cys-101/Cys-113 and Cys-104/Cys-120. Residues 127–128 constitute a propeptide that is removed on maturation; the sequence is EP. 2 disulfides stabilise this stretch: Cys-135–Cys-147 and Cys-138–Cys-154.

This sequence belongs to the sea anemone BBH family.

It localises to the secreted. The protein resides in the nematocyst. Its function is as follows. Inhibits ion channels. This chain is U-actitoxin-Avd13a/b, found in Anemonia viridis (Snakelocks anemone).